Here is an 83-residue protein sequence, read N- to C-terminus: Cytochrome b559 subunit alpha (83 aa).

A helical membrane pass occupies residues 21 to 35 (VIHSITIPSLFIAGW). A heme-binding site is contributed by H23.

The protein belongs to the PsbE/PsbF family. In terms of assembly, heterodimer of an alpha subunit and a beta subunit. PSII is composed of 1 copy each of membrane proteins PsbA, PsbB, PsbC, PsbD, PsbE, PsbF, PsbH, PsbI, PsbJ, PsbK, PsbL, PsbM, PsbT, PsbX, PsbY, PsbZ, Psb30/Ycf12, at least 3 peripheral proteins of the oxygen-evolving complex and a large number of cofactors. It forms dimeric complexes. The cofactor is heme b.

It is found in the plastid. The protein resides in the chloroplast thylakoid membrane. In terms of biological role, this b-type cytochrome is tightly associated with the reaction center of photosystem II (PSII). PSII is a light-driven water:plastoquinone oxidoreductase that uses light energy to abstract electrons from H(2)O, generating O(2) and a proton gradient subsequently used for ATP formation. It consists of a core antenna complex that captures photons, and an electron transfer chain that converts photonic excitation into a charge separation. The protein is Cytochrome b559 subunit alpha of Oenothera berteroana (Bertero's evening primrose).